We begin with the raw amino-acid sequence, 2148 residues long: MNHVTIKQSDTRADPFRVFIFGDQSSCNLSNLQLLLFKKSNVYLASFIDQVNLTLRHEIARLTAAERQSFPAFSSIQNLVARALKKDTSVALESTLATIYHLCCFLNYFGDGQEAYPTGPTTHVSGLCIGALAAAAVSSSKSLAELVQAGIDAVRVSLKVGLLVARTAALFSHQESNGASSSPWSYAVPDSQLPLALAEEAIESYQAKTNIPPLSLPYISAKGQNSWTVSGPPAIVQHFLQTSQFEKTLRLTPLAVHAPYHAPHIFSAVDVQHIMHAVGTVSNFSSKLSFISSSSSRNLPTGLKFQDLLYRAVEDILILPLDLREAAENIRLVLEATDNVQQCALFPISTGVCPSLKQSFSPAMASRVSIVDCIMERATADAGPKSTSGPKPSESKIAIIGMSGRFPESADVEAFWDLLHQGLDVHRPVPPDRYNGELYYDVTGKRKNTCKVMHGCWINDPGLFDAKFFNISPKEAEQSDPGQRLALATAYEALEAAGVVADRTPSTQRDRVGVFYGMTSDDYREVSCGQNVDTYFIPGGNRAFTPGKINYFFKYCGPSVSVDTACSSSLAAIHLACNSIWRNECDTAIAGGTNVMSNPDSFVGLDRGYFLSRTGNCHTFDDEADGYCRADAVGTVILKRLEDAIADHDPILGVISGALTNHSADAVSITRPHSGAQEEIFSKLLTESGVHPHQVSYIEMHGTGTQAGDATEMTSVLNCFAPSTSPRRLPHESLHLGSTKANVGHSESASGVSALIKVLLMMEKNIIPPHCGIKGKINHKFPTDLDQRNVHIAKTATQWNRRNEFNNIRRAFVNNFSAAGGNTALLVEDYPLLIADSSQQDARTAHVVTVSAKCIKSLKGNLENLKKFVQKQASTDGFLPKLSYTTTARRMHHPFRVAIPAANSEQLLSALDEELKHDSYTCSSESPVAFVFSGQGSQYSAMGQHLLHFTIFRDEVHAYDILAQRHGFPSIMPLIDGSVDIEDLEPLVVQLGTVCVQMALASLWMALGMRPAYVVGHSLGHYAALKVAGVLTASDTIYLVAMRARLLQNKCSRGSHAMLAIRSSAAAIQAHLDEGIHDIACINGPQDTVVSGCIDDIDRLSQKLMDKGIKATRVNVPFAFHSAQVDPILDELEAIASQVEFHTPRVAIGCPLLGRTFKAGETPSIEANHIRRHCRETVNFFDVLRSAKDEGFVSEKTAWIEIGPHTVCSNLVKANINQDIVAVPSLMRNKDGWQVLASSVATLYRHGSSVAWDEYHHDFEACKEVLRLPAYSWDNKLYWIDYVHDWLLTRGDPPVQAAASLPAPPSSFSTASVHRIVHESVDKGKLTLTAECEFTNEQLREVVYGHVVNGNRVCSSSLYTDFGVTLGSYILEKYRPDLQDHAVDVQDMVVNKALVHKEGPTMLLRIDVVLDMTDSKAASMSIYSVNSKGNKTADHAQSSLHFEQPKVWLKSWDSTQYYVERSIEWLKEKADQGLNSRMSSGVIYKLFSSLVDYSTAYKGMQEAIVNTEDFEATALVRFQVDEGNFRCNPMWVDSCGQLAGFLMNGHAKTPKDQVFINHGWQSFRTVRKFSKDKTYRTYVRMRCIEGTTYAGDVYIFDDEGIVGVCGSITFQGIPRKVLNTAMPPPKSQNEAPVRSAPAKPAAKPPKSASSEHSGHFARHSNIEPLKLDAALKSATTARNPMLAVFKIVSEEIGIPSASVDNGLVFADYGVDSLLSLSISGRLREELDLDVESSAFETCATLADLATHLGLDTFSSDQSSGQSSSSGGLSPRSDSIGEITSSATTPPSLSPRGSVSGSQCKDVCAILAEEIGVSMSEITNDTDLGALGMDSLMSLAVLSRLREELELDLEGDFFVSHPNFSSFKHMFQQGHGDEVEPEPSAELKQYRATSTLLQGNPKSALYTLFLLPDGSGSSFSYAPINAVRKDVCVFGLNCPWLKSAEKLVQFGLKGLATLYVEEIRRRAPHGPYNLGGWSAGGICAYEAAIQFTREGETVERLILLDSPNPIGLEKLPARLFDFVNGLGLFGDGKAPDWLLAHFLAFIDALDEWKPVPWDKALGGNSPPPRTYILWAEDGICKGTDARPEYRDDDPREMKWLLENRTNFGGNNWDVLLGQQSLSIERIQDANHFTMLRKGKNSERVAAFIRSTFG.

Residues 19–261 (FIFGDQSSCN…TPLAVHAPYH (243 aa)) are N-terminal acylcarrier protein transacylase domain (SAT). A Ketosynthase family 3 (KS3) domain is found at 394–829 (ESKIAIIGMS…GGNTALLVED (436 aa)). Catalysis depends on for beta-ketoacyl synthase activity residues Cys566, His701, and His745. The tract at residues 929–1233 (AFVFSGQGSQ…PSLMRNKDGW (305 aa)) is malonyl-CoA:ACP transacylase (MAT) domain. Residue Ser1018 is the For acyl/malonyl transferase activity of the active site. The interval 1310–1624 (TASVHRIVHE…RKVLNTAMPP (315 aa)) is product template (PT) domain. An N-terminal hotdog fold region spans residues 1314–1447 (HRIVHESVDK…SSLHFEQPKV (134 aa)). Residues 1314 to 1619 (HRIVHESVDK…FQGIPRKVLN (306 aa)) form the PKS/mFAS DH domain. The active-site Proton acceptor; for dehydratase activity is the His1346. Residues 1474–1619 (LNSRMSSGVI…FQGIPRKVLN (146 aa)) are C-terminal hotdog fold. Asp1533 functions as the Proton donor; for dehydratase activity in the catalytic mechanism. The segment at 1619 to 1657 (NTAMPPPKSQNEAPVRSAPAKPAAKPPKSASSEHSGHFA) is disordered. The span at 1635 to 1650 (SAPAKPAAKPPKSASS) shows a compositional bias: low complexity. The Carrier 1 domain occupies 1678 to 1752 (RNPMLAVFKI…DLATHLGLDT (75 aa)). At Ser1712 the chain carries O-(pantetheine 4'-phosphoryl)serine. The span at 1755-1790 (SDQSSGQSSSSGGLSPRSDSIGEITSSATTPPSLSP) shows a compositional bias: low complexity. The interval 1755–1796 (SDQSSGQSSSSGGLSPRSDSIGEITSSATTPPSLSPRGSVSG) is disordered. The 78-residue stretch at 1793-1870 (SVSGSQCKDV…SFKHMFQQGH (78 aa)) folds into the Carrier 2 domain. Ser1830 carries the O-(pantetheine 4'-phosphoryl)serine modification. The segment at 1882-2146 (LKQYRATSTL…ERVAAFIRST (265 aa)) is thioesterase (TE) domain. The active-site For thioesterase activity is Ser1973.

Polyketide synthase; part of the Pks1 gene cluster that mediates the biosynthesis of an anthraquinone derivative pigment that contributes to conidial pigmentation that provides protection from UV radiation, heat and cold stress. The polyketide synthase Pks1 produces 1-acetyl-2,4,6,8-tetrahydroxy-9,10-anthraquinone though condensation of acetyl-CoA with malonyl-CoA. The dehydratase EthD and the laccase Mlac1 further convert the anthraquinone derivative into the final conidial pigment. In Metarhizium guizhouense (strain ARSEF 977), this protein is Polyketide synthase 1.